The sequence spans 391 residues: Phosphoglycerate kinase (391 aa).

Substrate-binding positions include 21–23 (DLN), Arg-36, 59–62 (HLGR), Arg-113, and Arg-146. ATP is bound by residues Lys-197, Glu-319, and 345–348 (GGDT).

This sequence belongs to the phosphoglycerate kinase family. Monomer.

The protein resides in the cytoplasm. It catalyses the reaction (2R)-3-phosphoglycerate + ATP = (2R)-3-phospho-glyceroyl phosphate + ADP. It functions in the pathway carbohydrate degradation; glycolysis; pyruvate from D-glyceraldehyde 3-phosphate: step 2/5. The polypeptide is Phosphoglycerate kinase (Pseudoalteromonas atlantica (strain T6c / ATCC BAA-1087)).